Reading from the N-terminus, the 277-residue chain is Large ribosomal subunit protein uL2 (277 aa).

Positions 222-277 (GVAMNPVDHPHGGGEGRTSGGRHPVTPWGKPTKGKKTRSNKATDKFIMRSRHQRKK) are disordered.

It belongs to the universal ribosomal protein uL2 family. As to quaternary structure, part of the 50S ribosomal subunit. Forms a bridge to the 30S subunit in the 70S ribosome.

Its function is as follows. One of the primary rRNA binding proteins. Required for association of the 30S and 50S subunits to form the 70S ribosome, for tRNA binding and peptide bond formation. It has been suggested to have peptidyltransferase activity; this is somewhat controversial. Makes several contacts with the 16S rRNA in the 70S ribosome. The chain is Large ribosomal subunit protein uL2 from Brucella ovis (strain ATCC 25840 / 63/290 / NCTC 10512).